Consider the following 78-residue polypeptide: Beta-defensin 105A (78 aa).

Residues 1-27 (MALIRKTFYFLFAVFFILVQLPSGCQA) form the signal peptide. 3 disulfides stabilise this stretch: Cys46–Cys74, Cys53–Cys67, and Cys57–Cys73.

Belongs to the beta-defensin family.

It localises to the secreted. Has antimicrobial activity. The polypeptide is Beta-defensin 105A (DEFB105A) (Hylobates lar (Lar gibbon)).